The primary structure comprises 229 residues: Cell division protein FtsQ (229 aa).

A helical membrane pass occupies residues Met1–Leu21. Residues Glu22–Lys229 are Periplasmic-facing. One can recognise a POTRA domain in the interval Asn27–His97.

It belongs to the FtsQ/DivIB family. FtsQ subfamily. Part of a complex composed of FtsB, FtsL and FtsQ.

The protein resides in the cell inner membrane. Its function is as follows. Essential cell division protein. May link together the upstream cell division proteins, which are predominantly cytoplasmic, with the downstream cell division proteins, which are predominantly periplasmic. May control correct divisome assembly. The sequence is that of Cell division protein FtsQ from Actinobacillus pleuropneumoniae serotype 3 (strain JL03).